A 460-amino-acid chain; its full sequence is Asparagine--tRNA ligase (460 aa).

It belongs to the class-II aminoacyl-tRNA synthetase family. As to quaternary structure, homodimer.

It localises to the cytoplasm. It carries out the reaction tRNA(Asn) + L-asparagine + ATP = L-asparaginyl-tRNA(Asn) + AMP + diphosphate + H(+). The polypeptide is Asparagine--tRNA ligase (Picosynechococcus sp. (strain ATCC 27264 / PCC 7002 / PR-6) (Agmenellum quadruplicatum)).